Consider the following 1087-residue polypeptide: Voltage-gated inwardly rectifying potassium channel KCNH3 (1087 aa).

Topologically, residues 1–228 (MPAMRGLLAP…HCGALRATWD (228 aa)) are cytoplasmic. One can recognise a PAS domain in the interval 18 to 90 (IATRFDGTHS…QQIRKALDEH (73 aa)). In terms of domain architecture, PAC spans 93–145 (FKAELILYRKSGLPFWCLLDVIPIKNEKGEVALFLVSHKDISETKNRGGPDNW). The segment covering 137–150 (KNRGGPDNWKERGG) has biased composition (basic and acidic residues). Residues 137–161 (KNRGGPDNWKERGGGRRRYGRAGSK) are disordered. The helical transmembrane segment at 229-249 (GFILLATLYVAVTVPYSVCVS) threads the bilayer. Over 250–259 (TAREPSAARG) the chain is Extracellular. Residues 260 to 280 (PPSVCDLAVEVLFILDIVLNF) form a helical membrane-spanning segment. The Cytoplasmic portion of the chain corresponds to 281-302 (RTTFVSKSGQVVFAPKSICLHY). Residues 303-323 (VTTWFLLDVIAALPFDLLHAF) form a helical membrane-spanning segment. The Extracellular portion of the chain corresponds to 324 to 331 (KVNVYVGA). Residues 332 to 352 (HLLKTVRLLRLLRLLPRLDRY) traverse the membrane as a helical; Voltage-sensor segment. Residues 353–361 (SQYSAVVLT) are Cytoplasmic-facing. The chain crosses the membrane as a helical span at residues 362–382 (LLMAVFALLAHWVACVWFYIG). Residues 383-456 (QQEIENSESE…GGPSLRSAYI (74 aa)) lie on the Extracellular side of the membrane. Residues 416-436 (SPDGGNSSGQSENCSSSGGGS) are disordered. A compositionally biased stretch (low complexity) spans 419 to 431 (GGNSSGQSENCSS). 3 N-linked (GlcNAc...) asparagine glycosylation sites follow: asparagine 421, asparagine 428, and asparagine 439. The pore-forming intramembrane region spans 457-477 (TSLYFALSSLTSVGFGNVSAN). Positions 468-473 (SVGFGN) match the Selectivity filter motif. Residues 478–482 (TDTEK) are Extracellular-facing. The helical transmembrane segment at 483–503 (IFSICTMLIGALMHAVVFGNV) threads the bilayer. Over 504-1087 (TAIIQRMYAR…QWTQEEGTGV (584 aa)) the chain is Cytoplasmic. 585–700 (LFEAASRGCL…FAPRFSRGLR (116 aa)) serves as a coordination point for a nucleoside 3',5'-cyclic phosphate. Disordered regions lie at residues 733–813 (EKET…LQLP) and 975–1061 (LMAP…PWDP). Over residues 776 to 788 (TAPRPRLGGRGRP) the composition is skewed to basic residues.

This sequence belongs to the potassium channel family. H (Eag) (TC 1.A.1.20) subfamily. Kv12.2/KCNH3 sub-subfamily. In terms of assembly, the potassium channel is probably composed of a homo- or heterotetrameric complex of pore-forming alpha subunits that can associate with modulating beta subunits. Interacts with KCNE1 and KCNE3; these interactions regulate KCNH3 trafficking to the plasma membrane and its subsequent voltage-gated potassium channel activity. Post-translationally, N-glycosylated. N-glycosylation mediates traffick to the cell membrane but is not necessary for voltage-gated potassium channel activity. In terms of tissue distribution, highly expressed in adult and embryonic brain, in particular in cerebellum, brain stem, hippocampus, cortex and striatum. Also found in pituitary.

It localises to the cell membrane. The catalysed reaction is K(+)(in) = K(+)(out). Functionally, pore-forming (alpha) subunit of a voltage-gated inwardly rectifying potassium channel. Charactherized by a fast rate of activation during depolarization followed by a rapid inactivation at much more depolarized value causing inward rectification due to a C-type inactivation mechanism. Exhibits a rapid recovery from inactivation. This chain is Voltage-gated inwardly rectifying potassium channel KCNH3, found in Rattus norvegicus (Rat).